Consider the following 324-residue polypeptide: 4-hydroxy-2-oxoglutarate aldolase, mitochondrial (324 aa).

A mitochondrion-targeting transit peptide spans Met-1–Gln-22. Residue Ser-74–Asn-75 coordinates substrate. Lys-193 functions as the Schiff-base intermediate with substrate in the catalytic mechanism. Substrate is bound by residues Ser-195 and Gly-219.

Belongs to the DapA family. As to quaternary structure, homotetramer.

Its subcellular location is the mitochondrion. The enzyme catalyses (4S)-4-hydroxy-2-oxoglutarate = glyoxylate + pyruvate. The catalysed reaction is (4R)-4-hydroxy-2-oxoglutarate = glyoxylate + pyruvate. With respect to regulation, inhibited by divalent cations. Catalyzes the final step in the metabolic pathway of hydroxyproline. The protein is 4-hydroxy-2-oxoglutarate aldolase, mitochondrial of Danio rerio (Zebrafish).